We begin with the raw amino-acid sequence, 260 residues long: Cytosolic Fe-S cluster assembly factor Nubp2 homolog 1 (260 aa).

14–21 (GKGGVGKS) is an ATP binding site. Positions 188 and 191 each coordinate [4Fe-4S] cluster.

This sequence belongs to the Mrp/NBP35 ATP-binding proteins family. NUBP2/CFD1 subfamily. Heterotetramer of 2 Nubp1 and 2 Nubp2 chains. The cofactor is [4Fe-4S] cluster.

It is found in the cytoplasm. In terms of biological role, component of the cytosolic iron-sulfur (Fe/S) protein assembly (CIA) machinery. Required for maturation of extramitochondrial Fe-S proteins. The Nubp1-Nubp2 heterotetramer forms a Fe-S scaffold complex, mediating the de novo assembly of an Fe-S cluster and its transfer to target apoproteins. In Drosophila yakuba (Fruit fly), this protein is Cytosolic Fe-S cluster assembly factor Nubp2 homolog 1.